A 927-amino-acid polypeptide reads, in one-letter code: DNA-binding protein RFX6 (927 aa).

Disordered stretches follow at residues 1–21 (MAKVRELEEAFVQEQPSPQLP) and 81–108 (NFSSEEEDADTQESKTKAADPQLSQKKS). The RFX-type winged-helix DNA-binding region spans 123 to 198 (TLQWLEDNYI…YHYYGIGIKE (76 aa)).

Belongs to the RFX family. As to quaternary structure, interacts with RFX3. In the adult pancreas, expression is restricted to the islets where it could be detected in all endocrine lineages.

The protein resides in the nucleus. Its function is as follows. Transcription factor required to direct islet cell differentiation during endocrine pancreas development. Specifically required for the differentiation of 4 of the 5 islet cell types and for the production of insulin. Not required for pancreatic PP (polypeptide-producing) cells differentiation. Acts downstream of NEUROG3 and regulates the transcription factors involved in beta-cell maturation and function, thereby restricting the expression of the beta-cell differentiation and specification genes, and thus the beta-cell fate choice. Activates transcription by forming a heterodimer with RFX3 and binding to the X-box in the promoter of target genes. Involved in glucose-stimulated insulin secretion by promoting insulin and L-type calcium channel gene transcription. The sequence is that of DNA-binding protein RFX6 (Rfx6) from Mus musculus (Mouse).